A 380-amino-acid polypeptide reads, in one-letter code: Glucose-1-phosphate adenylyltransferase (380 aa).

Residues glycine 164, 179 to 180, and serine 190 contribute to the alpha-D-glucose 1-phosphate site; that span reads EK.

It belongs to the bacterial/plant glucose-1-phosphate adenylyltransferase family. In terms of assembly, homotetramer.

It carries out the reaction alpha-D-glucose 1-phosphate + ATP + H(+) = ADP-alpha-D-glucose + diphosphate. The protein operates within glycan biosynthesis; glycogen biosynthesis. In terms of biological role, involved in the biosynthesis of ADP-glucose, a building block required for the elongation reactions to produce glycogen. Catalyzes the reaction between ATP and alpha-D-glucose 1-phosphate (G1P) to produce pyrophosphate and ADP-Glc. The sequence is that of Glucose-1-phosphate adenylyltransferase from Streptococcus pneumoniae serotype 2 (strain D39 / NCTC 7466).